We begin with the raw amino-acid sequence, 355 residues long: Probable GTP 3',8-cyclase (355 aa).

The region spanning 5-233 (AYGRPLKDLR…GRLHNRRVYR (229 aa)) is the Radical SAM core domain. A GTP-binding site is contributed by arginine 14. The [4Fe-4S] cluster site is built by cysteine 21, cysteine 25, and cysteine 28. GTP is bound at residue lysine 69. An S-adenosyl-L-methionine-binding site is contributed by glycine 73. Threonine 97 serves as a coordination point for GTP. Residue serine 121 coordinates S-adenosyl-L-methionine. Lysine 157 is a binding site for GTP. 2 residues coordinate [4Fe-4S] cluster: cysteine 252 and cysteine 255. Position 257-259 (257-259 (RVR)) interacts with GTP. [4Fe-4S] cluster is bound at residue cysteine 269.

It belongs to the radical SAM superfamily. MoaA family. Requires [4Fe-4S] cluster as cofactor.

The catalysed reaction is GTP + AH2 + S-adenosyl-L-methionine = (8S)-3',8-cyclo-7,8-dihydroguanosine 5'-triphosphate + 5'-deoxyadenosine + L-methionine + A + H(+). It participates in cofactor biosynthesis; molybdopterin biosynthesis. In terms of biological role, catalyzes the cyclization of GTP to (8S)-3',8-cyclo-7,8-dihydroguanosine 5'-triphosphate. This chain is Probable GTP 3',8-cyclase, found in Aeropyrum pernix (strain ATCC 700893 / DSM 11879 / JCM 9820 / NBRC 100138 / K1).